The following is a 310-amino-acid chain: tRNA uridine(34) hydroxylase (310 aa).

Positions 124–218 (SDPEVLLIDT…YFEEVPQEES (95 aa)) constitute a Rhodanese domain. Cys178 acts as the Cysteine persulfide intermediate in catalysis.

The protein belongs to the TrhO family.

It catalyses the reaction uridine(34) in tRNA + AH2 + O2 = 5-hydroxyuridine(34) in tRNA + A + H2O. Catalyzes oxygen-dependent 5-hydroxyuridine (ho5U) modification at position 34 in tRNAs. This chain is tRNA uridine(34) hydroxylase, found in Pseudomonas putida (strain GB-1).